A 128-amino-acid chain; its full sequence is Aspartate 1-decarboxylase (128 aa).

Catalysis depends on serine 25, which acts as the Schiff-base intermediate with substrate; via pyruvic acid. Position 25 is a pyruvic acid (Ser) (serine 25). Threonine 57 contributes to the substrate binding site. Tyrosine 58 serves as the catalytic Proton donor. 73 to 75 (GAA) lines the substrate pocket.

It belongs to the PanD family. In terms of assembly, heterooctamer of four alpha and four beta subunits. Requires pyruvate as cofactor. Is synthesized initially as an inactive proenzyme, which is activated by self-cleavage at a specific serine bond to produce a beta-subunit with a hydroxyl group at its C-terminus and an alpha-subunit with a pyruvoyl group at its N-terminus.

It localises to the cytoplasm. The enzyme catalyses L-aspartate + H(+) = beta-alanine + CO2. Its pathway is cofactor biosynthesis; (R)-pantothenate biosynthesis; beta-alanine from L-aspartate: step 1/1. Functionally, catalyzes the pyruvoyl-dependent decarboxylation of aspartate to produce beta-alanine. The polypeptide is Aspartate 1-decarboxylase (Caldicellulosiruptor saccharolyticus (strain ATCC 43494 / DSM 8903 / Tp8T 6331)).